Consider the following 85-residue polypeptide: Toxin BmKITc (85 aa).

Residues 1-21 (MKLFLLLVIFASMLNDGLVNA) form the signal peptide. One can recognise an LCN-type CS-alpha/beta domain in the interval 22-82 (DGYIRGSDGC…KWKYESNTCG (61 aa)). Intrachain disulfides connect cysteine 31-cysteine 81, cysteine 35-cysteine 56, cysteine 42-cysteine 63, and cysteine 46-cysteine 65.

This sequence belongs to the long (4 C-C) scorpion toxin superfamily. Sodium channel inhibitor family. Beta subfamily. As to expression, expressed by the venom gland.

It localises to the secreted. Depressant insect beta-toxins cause a transient contraction paralysis followed by a slow flaccid paralysis. They bind voltage-independently at site-4 of sodium channels (Nav) and shift the voltage of activation toward more negative potentials thereby affecting sodium channel activation and promoting spontaneous and repetitive firing. The sequence is that of Toxin BmKITc from Olivierus martensii (Manchurian scorpion).